The primary structure comprises 114 residues: Protein U68 (114 aa).

Belongs to the herpesviridae UL96 family.

The polypeptide is Protein U68 (U68) (Homo sapiens (Human)).